Reading from the N-terminus, the 120-residue chain is Seripauperin-6 (120 aa).

An N-terminal signal peptide occupies residues 1-20; the sequence is MVKLTSIAAGVAAIAATASA.

Belongs to the SRP1/TIP1 family. Seripauperin subfamily.

The polypeptide is Seripauperin-6 (PAU6) (Saccharomyces cerevisiae (strain ATCC 204508 / S288c) (Baker's yeast)).